Consider the following 150-residue polypeptide: Transcriptional repressor NrdR (150 aa).

A zinc finger spans residues 3–34 (CPFCNFEESKVVDSRATDDNTTIRRRRECLNC). The 91-residue stretch at 49–139 (VLVVKKDLTR…VYRQFKDINT (91 aa)) folds into the ATP-cone domain.

The protein belongs to the NrdR family. Zn(2+) serves as cofactor.

In terms of biological role, negatively regulates transcription of bacterial ribonucleotide reductase nrd genes and operons by binding to NrdR-boxes. The chain is Transcriptional repressor NrdR from Clostridium botulinum (strain Alaska E43 / Type E3).